The following is a 508-amino-acid chain: Maturase K (508 aa).

The protein belongs to the intron maturase 2 family. MatK subfamily.

It is found in the plastid. The protein localises to the chloroplast. Functionally, usually encoded in the trnK tRNA gene intron. Probably assists in splicing its own and other chloroplast group II introns. The polypeptide is Maturase K (Stewartia pseudocamellia (Japanese stewartia)).